We begin with the raw amino-acid sequence, 107 residues long: C-X-C motif chemokine 3 (107 aa).

An N-terminal signal peptide occupies residues M1 to G34. 2 cysteine pairs are disulfide-bonded: C43-C69 and C45-C85.

Belongs to the intercrine alpha (chemokine CxC) family. Post-translationally, N-terminal processed form GRO-gamma(5-73) is produced by proteolytic cleavage after secretion from peripheral blood monocytes.

Its subcellular location is the secreted. In terms of biological role, ligand for CXCR2. Has chemotactic activity for neutrophils. May play a role in inflammation and exert its effects on endothelial cells in an autocrine fashion. In vitro, the processed form GRO-gamma(5-73) shows a fivefold higher chemotactic activity for neutrophilic granulocytes. The protein is C-X-C motif chemokine 3 (CXCL3) of Homo sapiens (Human).